The following is a 584-amino-acid chain: Protein BONZAI 3 (584 aa).

The interval 1 to 23 (MGGCLSGDVKGGKQAIGGVQQRP) is disordered. A lipid anchor (N-myristoyl glycine) is attached at G2. C2 domains are found at residues 34 to 167 (HNDA…TLTL) and 178 to 305 (NRNL…NFVY). Ca(2+) is bound by residues D67, D73, D126, D128, and D145. The VWFA domain maps to 344–563 (NFMVAVDFTA…SVVQALLEEL (220 aa)).

This sequence belongs to the copine family. In terms of assembly, interacts with BAP1 and BAP2. Requires Ca(2+) as cofactor. Expressed at an extremely low level.

It is found in the cell membrane. Negative regulator of cell death and defense responses. Repress a number of R genes and may have effects in promoting growth and development. May function in membrane trafficking and in fusion of vesicles with plasma membrane. The protein is Protein BONZAI 3 (BON3) of Arabidopsis thaliana (Mouse-ear cress).